A 195-amino-acid chain; its full sequence is Cbp/p300-interacting transactivator 1 (195 aa).

Disordered regions lie at residues 1-24 (MPTMSRPALDVKGGTSPVKENANP) and 51-149 (ASNG…SPAI). A compositionally biased stretch (low complexity) spans 54 to 78 (GTKASGAPTSSSGSPSPISSSTATP). Positions 97-106 (MQLQKLNSQY) are enriched in polar residues. Residues 137 to 148 (SLSPSAGAQSPA) are compositionally biased toward low complexity. Residues 160–169 (LMSLVVELGL) carry the Nuclear export signal motif.

The protein belongs to the CITED family. Interacts (via C-terminus) with CREBBP. Interacts with EGR2. Homodimer. Binds to RBM14. Interacts (via N-terminus) with HSPA8; the interaction suppresses the association of CITED1 with p300/CBP and SMAD-mediated transcription transactivation. Interacts (via C-terminus) with TOX3 (via HGM box); the interaction increases estrogen-response element (ERE)-dependent transcription and protection against cell death. Interacts with ESR1; the interaction occurs in a estrogen-dependent manner. Interacts (unphosphorylated form preferentially and via C-terminus) with EP300. Phosphorylated. Phosphorylation changes in a cell cycle-dependent manner and reduces its transcriptional cofactor activity.

It localises to the nucleus. It is found in the cytoplasm. Its function is as follows. Transcriptional coactivator of the p300/CBP-mediated transcription complex. Enhances SMAD-mediated transcription by strengthening the functional link between the DNA-binding SMAD transcription factors and the p300/CBP transcription coactivator complex. Stimulates estrogen-dependent transactivation activity mediated by estrogen receptors signaling; stabilizes the interaction of estrogen receptor ESR1 and histone acetyltransferase EP300. Positively regulates TGF-beta signaling through its association with the SMAD/p300/CBP-mediated transcriptional coactivator complex. Induces transcription from estrogen-responsive promoters and protection against cell death. Potentiates EGR2-mediated transcriptional activation activity from the ERBB2 promoter. Acts as an inhibitor of osteoblastic mineralization through a cAMP-dependent parathyroid hormone receptor signaling. May play a role in pigmentation of melanocytes. Associates with chromatin to the estrogen-responsive TGF-alpha promoter region in a estrogen-dependent manner. The protein is Cbp/p300-interacting transactivator 1 (CITED1) of Bos taurus (Bovine).